We begin with the raw amino-acid sequence, 219 residues long: Transmembrane protein 247 (219 aa).

Basic and acidic residues-rich tracts occupy residues 1 to 10 (MAAEDREMME) and 29 to 45 (SKSEGKPRAYLEAESQK). The segment at 1–101 (MAAEDREMME…LPPTPGTERN (101 aa)) is disordered. Residues 121–156 (LHEKNQRQRQHEVVMEQLQRERQHEVVMEQLQQEAA) are a coiled coil. 2 consecutive transmembrane segments (helical) span residues 167-187 (FLLPQNQFAMFLYCFIFIHII) and 194-214 (VFFLFAKHYLFCIAAILLCLI).

It is found in the membrane. This Homo sapiens (Human) protein is Transmembrane protein 247 (TMEM247).